The following is a 416-amino-acid chain: MIFTLGINHHSAPLAIRERVAFGADKLPHALADLTRERPVREVAILSTCNRTEIYCSAESPDVVIDWLAHYHQVGREEIAPYIYTHDQPEAIRHAFRVASGLDSMVIGEPQILGQMKDAVRAAEENGTLGTQLHKLFQRSFSVAKEVRSTTAIGANIVSMAAAGVHLAERIFESIAGQRILFIGAGEMIELCAAHFCAGKPKQVTIANRTLERGRALAEQYGGTAIRLDELGEHLAQHDIVVSCTASPLPIIGLGMVERAIKTRRHRPIFMVDLAVPRDIEEEVGELDDVFLYTVDDLAQVVESGLESRQAAVVEAEDIIANRVKDFLGWLESRDTVPVIRSLRDSAERMRRHEIEHAMKLLAKGEAPEKVLEHLSHRLTNKFLHAPTQTLNSAEGGERADLQGAAARLFHLHAAD.

Residues 48–51 (TCNR), Ser104, 109–111 (EPQ), and Gln115 contribute to the substrate site. Catalysis depends on Cys49, which acts as the Nucleophile. NADP(+) is bound at residue 184 to 189 (GAGEMI).

This sequence belongs to the glutamyl-tRNA reductase family. Homodimer.

It catalyses the reaction (S)-4-amino-5-oxopentanoate + tRNA(Glu) + NADP(+) = L-glutamyl-tRNA(Glu) + NADPH + H(+). It functions in the pathway porphyrin-containing compound metabolism; protoporphyrin-IX biosynthesis; 5-aminolevulinate from L-glutamyl-tRNA(Glu): step 1/2. Its function is as follows. Catalyzes the NADPH-dependent reduction of glutamyl-tRNA(Glu) to glutamate 1-semialdehyde (GSA). This is Glutamyl-tRNA reductase from Dechloromonas aromatica (strain RCB).